The primary structure comprises 542 residues: Nibrin homolog (542 aa).

One can recognise an FHA domain in the interval 25–90 (YKVGRKGCDI…YGTFVKTDLG (66 aa)). A BRCT domain is found at 119-195 (IYRLSLIPLV…KTIILTNWVM (77 aa)). A disordered region spans residues 409-430 (SRGHMDEKNSSDSVTIRRDRND). The segment at 465-500 (VDFKRFRKGNVTCGNSFSSLIPFAKDPYKEYDSWDV) is involved in MRE11-binding.

The protein belongs to the Nibrin family. In terms of assembly, component of the MRN complex composed of two heterodimers RAD50 and MRE11 associated with a single NBS1.

Its subcellular location is the nucleus. The protein resides in the chromosome. In terms of biological role, component of the MRN complex, which plays a central role in double-strand break (DSB) repair, DNA recombination, maintenance of telomere integrity and meiosis. The MRN complex is involved in the repair of DNA double-strand breaks (DSBs) via homologous recombination (HR), an error-free mechanism which primarily occurs during S and G2 phases. The complex (1) mediates the end resection of damaged DNA, which generates proper single-stranded DNA, a key initial steps in HR, and is (2) required for the recruitment of other repair factors and efficient activation of ATM and ATR upon DNA damage. The MRN complex possesses single-strand endonuclease activity and double-strand-specific 3'-5' exonuclease activity, which are provided by MRE11, to initiate end resection, which is required for single-strand invasion and recombination. Within the MRN complex, NBS1 acts as a protein-protein adapter, which specifically recognizes and binds phosphorylated proteins, promoting their recruitment to DNA damage sites. Recruits MRE11 and RAD50 components of the MRN complex to DSBs in response to DNA damage. The chain is Nibrin homolog from Arabidopsis thaliana (Mouse-ear cress).